The primary structure comprises 269 residues: Phosphonates import ATP-binding protein PhnC 2 (269 aa).

Residues 2–246 (LRIDSLSKRY…VLNEIYGEED (245 aa)) enclose the ABC transporter domain. 35–42 (GPSGAGKS) lines the ATP pocket. The tract at residues 246 to 269 (DWNASGPAQDSEENEAVSAGVATH) is disordered.

The protein belongs to the ABC transporter superfamily. Phosphonates importer (TC 3.A.1.9.1) family. The complex is composed of two ATP-binding proteins (PhnC), two transmembrane proteins (PhnE) and a solute-binding protein (PhnD).

Its subcellular location is the cell inner membrane. The catalysed reaction is phosphonate(out) + ATP + H2O = phosphonate(in) + ADP + phosphate + H(+). Part of the ABC transporter complex PhnCDE involved in phosphonates import. Responsible for energy coupling to the transport system. This chain is Phosphonates import ATP-binding protein PhnC 2, found in Synechococcus sp. (strain JA-2-3B'a(2-13)) (Cyanobacteria bacterium Yellowstone B-Prime).